The sequence spans 218 residues: Probable transaldolase (218 aa).

K87 functions as the Schiff-base intermediate with substrate in the catalytic mechanism.

This sequence belongs to the transaldolase family. Type 3B subfamily.

It is found in the cytoplasm. It carries out the reaction D-sedoheptulose 7-phosphate + D-glyceraldehyde 3-phosphate = D-erythrose 4-phosphate + beta-D-fructose 6-phosphate. It participates in carbohydrate degradation; pentose phosphate pathway; D-glyceraldehyde 3-phosphate and beta-D-fructose 6-phosphate from D-ribose 5-phosphate and D-xylulose 5-phosphate (non-oxidative stage): step 2/3. Transaldolase is important for the balance of metabolites in the pentose-phosphate pathway. The polypeptide is Probable transaldolase (Bacteroides fragilis (strain YCH46)).